Here is a 150-residue protein sequence, read N- to C-terminus: Putative STAG3-like protein 4 (150 aa).

The protein belongs to the SCC3 family.

The chain is Putative STAG3-like protein 4 (STAG3L4) from Homo sapiens (Human).